Reading from the N-terminus, the 342-residue chain is 3-isopropylmalate dehydrogenase (342 aa).

Positions 87, 97, 121, and 212 each coordinate substrate. Residues Asp212, Asp236, and Asp240 each coordinate Mg(2+). 272 to 284 serves as a coordination point for NAD(+); it reads GSAPDIAGRQLAD. Residues 319–328 show a composition bias toward low complexity; the sequence is RAAAGAAQPS. The interval 319 to 342 is disordered; that stretch reads RAAAGAAQPSTRERGEDLAARAAG. Over residues 329-342 the composition is skewed to basic and acidic residues; sequence TRERGEDLAARAAG.

It belongs to the isocitrate and isopropylmalate dehydrogenases family. LeuB type 2 subfamily. Homodimer. It depends on Mg(2+) as a cofactor. Requires Mn(2+) as cofactor.

It is found in the cytoplasm. The catalysed reaction is (2R,3S)-3-isopropylmalate + NAD(+) = 4-methyl-2-oxopentanoate + CO2 + NADH. It participates in amino-acid biosynthesis; L-leucine biosynthesis; L-leucine from 3-methyl-2-oxobutanoate: step 3/4. Its function is as follows. Catalyzes the oxidation of 3-carboxy-2-hydroxy-4-methylpentanoate (3-isopropylmalate) to 3-carboxy-4-methyl-2-oxopentanoate. The product decarboxylates to 4-methyl-2 oxopentanoate. The protein is 3-isopropylmalate dehydrogenase of Frankia casuarinae (strain DSM 45818 / CECT 9043 / HFP020203 / CcI3).